We begin with the raw amino-acid sequence, 310 residues long: Quinolinate synthase 2 (310 aa).

Residues His-30 and Ser-47 each coordinate iminosuccinate. Cys-92 provides a ligand contact to [4Fe-4S] cluster. Iminosuccinate-binding positions include 118-120 and Ser-135; that span reads YVN. Cys-177 lines the [4Fe-4S] cluster pocket. Residues 203–205 and Thr-220 each bind iminosuccinate; that span reads HPE. Position 265 (Cys-265) interacts with [4Fe-4S] cluster.

Belongs to the quinolinate synthase family. Type 2 subfamily. Requires [4Fe-4S] cluster as cofactor.

Its subcellular location is the cytoplasm. The catalysed reaction is iminosuccinate + dihydroxyacetone phosphate = quinolinate + phosphate + 2 H2O + H(+). It participates in cofactor biosynthesis; NAD(+) biosynthesis; quinolinate from iminoaspartate: step 1/1. In terms of biological role, catalyzes the condensation of iminoaspartate with dihydroxyacetone phosphate to form quinolinate. The polypeptide is Quinolinate synthase 2 (Methanosarcina acetivorans (strain ATCC 35395 / DSM 2834 / JCM 12185 / C2A)).